Consider the following 70-residue polypeptide: DNA-directed RNA polymerase subunit epsilon (70 aa).

Belongs to the RNA polymerase subunit epsilon family. As to quaternary structure, RNAP is composed of a core of 2 alpha, a beta and a beta' subunit. The core is associated with a delta subunit, and at least one of epsilon or omega. When a sigma factor is associated with the core the holoenzyme is formed, which can initiate transcription.

It carries out the reaction RNA(n) + a ribonucleoside 5'-triphosphate = RNA(n+1) + diphosphate. Functionally, a non-essential component of RNA polymerase (RNAP). The sequence is that of DNA-directed RNA polymerase subunit epsilon from Lacticaseibacillus casei (strain BL23) (Lactobacillus casei).